The following is a 75-amino-acid chain: UPF0352 protein YejL (75 aa).

It belongs to the UPF0352 family.

This is UPF0352 protein YejL from Shigella dysenteriae serotype 1 (strain Sd197).